The chain runs to 249 residues: MSRLWLIVPAAGQGRRMGAECPKQYLDIAGRPVLAHTLARLHEAFPEAALRLCLDPDDTRFSPEWVPFADWQRVAGGRERVDSVENALASLADVAADDDLVLVHDVARPCVAVEDLRRLREALTTSPEGGLLAAPVADTMKRADARGHVVHTVSREGLWHAMTPQGAPYRVLCRAFAHARGAGVVLTDEASALEAWGLAPRLVPGRRDNLKITHPEDLALATRLLAGDPASRRATGALSDDSLADEARS.

It belongs to the IspD/TarI cytidylyltransferase family. IspD subfamily.

It catalyses the reaction 2-C-methyl-D-erythritol 4-phosphate + CTP + H(+) = 4-CDP-2-C-methyl-D-erythritol + diphosphate. The protein operates within isoprenoid biosynthesis; isopentenyl diphosphate biosynthesis via DXP pathway; isopentenyl diphosphate from 1-deoxy-D-xylulose 5-phosphate: step 2/6. Functionally, catalyzes the formation of 4-diphosphocytidyl-2-C-methyl-D-erythritol from CTP and 2-C-methyl-D-erythritol 4-phosphate (MEP). The protein is 2-C-methyl-D-erythritol 4-phosphate cytidylyltransferase of Chromohalobacter salexigens (strain ATCC BAA-138 / DSM 3043 / CIP 106854 / NCIMB 13768 / 1H11).